Reading from the N-terminus, the 200-residue chain is ATP synthase subunit b 2 (200 aa).

The span at 1–16 (MAEQNILTTPSPNADT) shows a compositional bias: polar residues. The disordered stretch occupies residues 1-38 (MAEQNILTTPSPNADTTIVPPGSPHTHTEQPSGGHGGA). A helical transmembrane segment spans residues 46–66 (TFLAQLIWLALAFGLLYYLMS).

This sequence belongs to the ATPase B chain family. As to quaternary structure, F-type ATPases have 2 components, F(1) - the catalytic core - and F(0) - the membrane proton channel. F(1) has five subunits: alpha(3), beta(3), gamma(1), delta(1), epsilon(1). F(0) has three main subunits: a(1), b(2) and c(10-14). The alpha and beta chains form an alternating ring which encloses part of the gamma chain. F(1) is attached to F(0) by a central stalk formed by the gamma and epsilon chains, while a peripheral stalk is formed by the delta and b chains.

Its subcellular location is the cell inner membrane. Functionally, f(1)F(0) ATP synthase produces ATP from ADP in the presence of a proton or sodium gradient. F-type ATPases consist of two structural domains, F(1) containing the extramembraneous catalytic core and F(0) containing the membrane proton channel, linked together by a central stalk and a peripheral stalk. During catalysis, ATP synthesis in the catalytic domain of F(1) is coupled via a rotary mechanism of the central stalk subunits to proton translocation. Its function is as follows. Component of the F(0) channel, it forms part of the peripheral stalk, linking F(1) to F(0). The b'-subunit is a diverged and duplicated form of b found in plants and photosynthetic bacteria. The protein is ATP synthase subunit b 2 (atpF2) of Methylorubrum populi (strain ATCC BAA-705 / NCIMB 13946 / BJ001) (Methylobacterium populi).